Reading from the N-terminus, the 208-residue chain is Small ribosomal subunit protein eS8 (208 aa).

It belongs to the eukaryotic ribosomal protein eS8 family. As to quaternary structure, component of the small ribosomal subunit. Identified in a IGF2BP1-dependent mRNP granule complex containing untranslated mRNAs. Part of the small subunit (SSU) processome, composed of more than 70 proteins and the RNA chaperone small nucleolar RNA (snoRNA) U3.

Its subcellular location is the cytoplasm. It localises to the membrane. The protein resides in the nucleus. It is found in the nucleolus. Functionally, component of the small ribosomal subunit. The ribosome is a large ribonucleoprotein complex responsible for the synthesis of proteins in the cell. Part of the small subunit (SSU) processome, first precursor of the small eukaryotic ribosomal subunit. During the assembly of the SSU processome in the nucleolus, many ribosome biogenesis factors, an RNA chaperone and ribosomal proteins associate with the nascent pre-rRNA and work in concert to generate RNA folding, modifications, rearrangements and cleavage as well as targeted degradation of pre-ribosomal RNA by the RNA exosome. The protein is Small ribosomal subunit protein eS8 (rps-8) of Caenorhabditis elegans.